The sequence spans 182 residues: UPF0316 protein BCQ_3166 (182 aa).

3 consecutive transmembrane segments (helical) span residues 6-26, 32-52, and 58-78; these read LIFV…ILLV, SAAA…GIVF, and WMNI…GGYI.

Belongs to the UPF0316 family.

It localises to the cell membrane. This Bacillus cereus (strain Q1) protein is UPF0316 protein BCQ_3166.